Consider the following 1651-residue polypeptide: MPFAKRIVEPQWLCRQRRPAPGPAVDASGGSAEPPPPLQPPGRRDLDEVEAPGPEEPARAVPAPSGLPPPPPPLPAPADQTQPPHGEASVAGEESTAGIPEAAPAAGEASSAAAAAAVLLMLDLCAVSNAALARVLRQLSDVARHACSLFQELESDIQLTHRRVWALQGKLGGVQRVLSTLDPKQEAVPVSNLDIESKLSVYYRAPWHQQRNIFLPATRPPCVEELHRHARQSLQALRREHRSRSDRREQRAAAPLSIAAPPLPAYPPAHSQRRREFKDRHFLTFNSTRSPSPTECCHMTPWSRKSHPPEDEDTDVMLGQRPKNPIHNIPSTLDKQTNWSKALPLPTPEEKMKQDAQVISSCIIPINVTGVGFDREASIRCSLVHSQSVLQRRRKLRRRKTISGIPRRVQQEIDSDESPVARERNVIVHTNPDPSNTVNRISGTRDSECQTEDILIAAPSRRRIRAQRGQSIAASLSHSAGNISALADKGDTMFTPAVSSRTRSRSLPREGNRGGDAEPKVGAKPSAYEEGESFVGDHERTPNDFSEAPSSPSAQDHQPTLGLACSQHLHSPQHKLSERGRSRLSRMAADSGSCDISSNSDTFGSPIHCISTAGVLLSSHMDQKDDHQSSSGNWSGSSSTCPSQTSETIPPAASPPLTGSSHCDSELSLNTAPHANEDASVFVTEQYNDHLDKVRGHRANSFTSTVADLLDDPNNSNTSDSEWNYLHHHHDASCRQDFSPERPKADSLGCPSFTSMATYDSFLEKSPSDKADTSSHFSVDTEGYYTSMHFDCGLKGNKSYVCHYAALGPENGQGVGASPGLPDCAWQDYLDHKRQGRPSISFRKPKAKPTPPKRSSSLRKSDGNADISEKKEPKISSGQHLPHSSREMKLPLDFANTPSRMENANLPTKQEPSWINQSEQGIKEPQLDASDIPPFKDEVAESTHYADLWLLNDLKTNDPYRSLSNSSTATGTTVIECIKSPESSESQTSQSESRATTPSLPSVDNEFKLASPEKLAGLASPSSGYSSQSETPTSSFPTAFFSGPLSPGGSKRKPKVPERKSSLQQPSLKDGTISLSKDLELPIIPPTHLDLSALHNVLNKPFHHRHPLHVFTHNKQNTVGETLRSNPPPSLAITPTILKSVNLRSINKSEEVKQKEENNTDLPYLEESTLTTAALSPSKIRPHTANKSVSRQYSTEDTILSFLDSSAVEMGPDKLHLEKNSTFDVKNRCDPETITSAGSSLLDSNVTKDQVRTETEPIPENTPTKNCAFPTEGFQRVSAARPNDLDGKIIQYGPGPDETLEQVQKAPSAGLEEVAQPESVDVITSQSDSPTRATDVSNQFKHQFVMSRHHDKVPGTISYESEITSVNSFPEKCSKQENIASGISAKSASDNSKAEETQGNVDEASLKESSPSDDSIISPLSEDSQAEAEGVFVSPNKPRTTEDLFAVIHRSKRKVLGRKDSGDMSVRSKSRAPLSSSSSSASSITSPSSNVTTPNSQRSPGLIYRNAKKSNTSNEEFKLLLLKKGSRSDSSYRMSATEILKSPILPKPPGELTAESPQSTDDAHQGSQGAEALSPLSPCSPRVNAEGFSSKSFATSASARVGRSRAPPAASSSRYSVRCRLYNTPMQAISEGETENSDGSPHDDRSSQSST.

Disordered stretches follow at residues 1 to 104 (MPFA…EAAP), 235 to 274 (QALRREHRSRSDRREQRAAAPLSIAAPPLPAYPPAHSQRR), and 288 to 314 (TRSPSPTECCHMTPWSRKSHPPEDEDT). The WAVE homology domain (WHD) stretch occupies residues 1–262 (MPFAKRIVEP…AAPLSIAAPP (262 aa)). Residues 65 to 76 (SGLPPPPPPLPA) are compositionally biased toward pro residues. Phosphothreonine occurs at positions 332 and 401. Position 415 is a phosphoserine (serine 415). Disordered regions lie at residues 494-598 (FTPA…DISS) and 620-669 (HMDQ…ELSL). Residues 507-521 (LPREGNRGGDAEPKV) are compositionally biased toward basic and acidic residues. Phosphoserine is present on serine 533. The span at 548-558 (APSSPSAQDHQ) shows a compositional bias: polar residues. Over residues 629–648 (SSSGNWSGSSSTCPSQTSET) the composition is skewed to low complexity. Residues 657–669 (LTGSSHCDSELSL) are compositionally biased toward polar residues. Residue serine 739 is modified to Phosphoserine. 3 disordered regions span residues 835–888 (QGRP…SREM), 980–1004 (SPESSESQTSQSESRATTPSLPSVD), and 1017–1071 (GLAS…LKDG). The span at 859–874 (RKSDGNADISEKKEPK) shows a compositional bias: basic and acidic residues. Low complexity predominate over residues 980–993 (SPESSESQTSQSES). Polar residues predominate over residues 1020 to 1037 (SPSSGYSSQSETPTSSFP). A Phosphoserine modification is found at serine 1176. At threonine 1262 the chain carries Phosphothreonine. Phosphoserine is present on serine 1329. Disordered stretches follow at residues 1383 to 1436 (ISAK…VSPN), 1454 to 1509 (KVLG…NAKK), and 1526 to 1651 (SRSD…QSST). Low complexity-rich tracts occupy residues 1408-1423 (ESSPSDDSIISPLSED) and 1465-1496 (SVRSKSRAPLSSSSSSASSITSPSSNVTTPNS). Serine 1499 is modified (phosphoserine). The span at 1555–1568 (ESPQSTDDAHQGSQ) shows a compositional bias: polar residues. Residues 1588–1618 (FSSKSFATSASARVGRSRAPPAASSSRYSVR) show a composition bias toward low complexity. A compositionally biased stretch (basic and acidic residues) spans 1640–1651 (SPHDDRSSQSST).

This sequence belongs to the NHS family. In terms of assembly, interacts with the tight junction protein TJP1/ZO-1. Associates with actin-rich structures. Interacts with BRK1 and with all three members of the WAVE protein family, WASF1, WASF2 and WASF3. As to expression, detected at low levels in all tissues analyzed. Detected in fetal and adult brain, lens, retina, retinal pigment epithelium, placenta, lymphocytes and fibroblasts. Levels in retinal pigment epithelium, placenta, lymphocytes, and fibroblasts are very low. Expressed also in kidney, lung and thymus.

Its subcellular location is the apical cell membrane. The protein resides in the cell projection. It is found in the lamellipodium. It localises to the cell junction. The protein localises to the tight junction. Its subcellular location is the focal adhesion. The protein resides in the cytoplasm. In terms of biological role, may function in cell morphology by maintaining the integrity of the circumferential actin ring and controlling lamellipod formation. Involved in the regulation eye, tooth, brain and craniofacial development. The protein is Actin remodeling regulator NHS (NHS) of Homo sapiens (Human).